A 954-amino-acid chain; its full sequence is Glycine dehydrogenase (decarboxylating) (954 aa).

Lys706 carries the N6-(pyridoxal phosphate)lysine modification.

This sequence belongs to the GcvP family. As to quaternary structure, the glycine cleavage system is composed of four proteins: P, T, L and H. Pyridoxal 5'-phosphate is required as a cofactor.

The catalysed reaction is N(6)-[(R)-lipoyl]-L-lysyl-[glycine-cleavage complex H protein] + glycine + H(+) = N(6)-[(R)-S(8)-aminomethyldihydrolipoyl]-L-lysyl-[glycine-cleavage complex H protein] + CO2. In terms of biological role, the glycine cleavage system catalyzes the degradation of glycine. The P protein binds the alpha-amino group of glycine through its pyridoxal phosphate cofactor; CO(2) is released and the remaining methylamine moiety is then transferred to the lipoamide cofactor of the H protein. This chain is Glycine dehydrogenase (decarboxylating), found in Pseudomonas syringae pv. tomato (strain ATCC BAA-871 / DC3000).